We begin with the raw amino-acid sequence, 488 residues long: Probable malate:quinone oxidoreductase (488 aa).

Belongs to the MQO family. It depends on FAD as a cofactor.

The enzyme catalyses (S)-malate + a quinone = a quinol + oxaloacetate. Its pathway is carbohydrate metabolism; tricarboxylic acid cycle; oxaloacetate from (S)-malate (quinone route): step 1/1. This Neisseria gonorrhoeae (strain ATCC 700825 / FA 1090) protein is Probable malate:quinone oxidoreductase.